The following is a 74-amino-acid chain: Psi-conotoxin PrIIIE (74 aa).

Residues methionine 1–alanine 19 form the signal peptide. The propeptide occupies leucine 20 to arginine 50. Intrachain disulfides connect cysteine 54–cysteine 66, cysteine 55–cysteine 71, and cysteine 61–cysteine 72. Cysteine amide is present on cysteine 72.

It belongs to the conotoxin M superfamily. In terms of tissue distribution, expressed by the venom duct.

It is found in the secreted. In terms of biological role, psi-conotoxins act on postsynaptic membranes, and act as non-competitive antagonist of nicotinic acetylcholine receptors (nAChR). Reversibly inhibits both adult- and fetal-types nAChR. The inhibition potency against the adult- (alpha-1/beta-1/epsilon/delta) is higher than against the fetal-type (alpha-1/beta-1/gamma/delta). Induces flaccid paralysis in goldfish, but does not induce any remarkable behavior in mice and does not block action potential in directly stimulated frog muscle preparations. The sequence is that of Psi-conotoxin PrIIIE from Conus parius (Cone snail).